Here is a 323-residue protein sequence, read N- to C-terminus: Acetyl esterase (323 aa).

The Involved in the stabilization of the negatively charged intermediate by the formation of the oxyanion hole signature appears at histidine 91 to glycine 93. Catalysis depends on residues serine 165, aspartate 262, and histidine 292.

Belongs to the 'GDXG' lipolytic enzyme family. As to quaternary structure, homodimer. Interacts with MalT and MelA.

The protein resides in the cytoplasm. Displays esterase activity towards short chain fatty esters (acyl chain length of up to 8 carbons). Able to hydrolyze triacetylglycerol (triacetin) and tributyrylglycerol (tributyrin), but not trioleylglycerol (triolein) or cholesterol oleate. Negatively regulates MalT activity by antagonizing maltotriose binding. Inhibits MelA galactosidase activity. The chain is Acetyl esterase from Salmonella paratyphi A (strain AKU_12601).